Consider the following 186-residue polypeptide: Putative inactive recombination-promoting nuclease-like protein YjiQ (186 aa).

This sequence belongs to the Rpn/YhgA-like nuclease family.

This pseudogene is the C-terminal fragment of low activity DNA endonuclease RpnD which probably yields 3'-hydroxyl ends. The intact protein can be seen in this entry (AC B7NGZ6). Expression of the repaired protein increases the frequency of recA-independent recombination, but also decreases viability probably via DNA damage; in a RecA strain expression has no effect on viability but does induce the SOS repair response. May play a role in horizontal gene transfer. The protein is Putative inactive recombination-promoting nuclease-like protein YjiQ (yjiQ) of Escherichia coli (strain K12).